Here is a 375-residue protein sequence, read N- to C-terminus: Platelet-derived growth factor receptor-like protein (375 aa).

Positions 1 to 21 (MKIWLLLGLLLMHEALEDVTG) are cleaved as a signal peptide. The segment at 20–64 (TGQHPPKNKRPKEPGENRIKPTNKKVKPKIPKIKDRDSADPTPKT) is disordered. Residues 40–50 (PTNKKVKPKIP) are compositionally biased toward basic residues. Positions 62–159 (PKTQSIMTQM…GYVCRRDEAK (98 aa)) constitute an Ig-like C2-type 1 domain. A disulfide bridge links Cys96 with Cys143. Residues Asn132 and Asn219 are each glycosylated (N-linked (GlcNAc...) asparagine). The Ig-like C2-type 2 domain maps to 272-373 (PSTTILASSN…GQTTVATTVE (102 aa)). A disulfide bond links Cys293 and Cys357.

Forms a complex composed of PDGFRL, TNK2 and GRB2.

The protein localises to the secreted. This is Platelet-derived growth factor receptor-like protein (PDGFRL) from Bos taurus (Bovine).